The primary structure comprises 115 residues: MARDVPASTPAGDTPTLTKAELAELLFDSVGLNKREAKDMVEAFFEVIRDALENGESVKLSGFGNFQLRDKPQRPGRNPKTGEAIPIAARRVVTFHASQKLKALVENGAEPDLAR.

It belongs to the bacterial histone-like protein family. Heterodimer of an alpha and a beta chain.

Its function is as follows. This protein is one of the two subunits of integration host factor, a specific DNA-binding protein that functions in genetic recombination as well as in transcriptional and translational control. This is Integration host factor subunit alpha from Burkholderia pseudomallei (strain K96243).